The chain runs to 871 residues: Bifunctional cordycepin biosynthesis cluster protein 3 (871 aa).

It participates in secondary metabolite biosynthesis. Its function is as follows. Nucleoside/nucleotide kinase; part of the gene cluster that mediates the biosynthesis of cordycepin (COR) and pentostatin (PTN), two adenosine analogs with related bioactivity profiles as both mimic adenosine and can inhibit some of the processes that are adenosine dependent. Within the pathway, cns3 catalyzes both the first step of cordycepin biosynthesis by phosphorylating adenosine into 3'-AMP via its kinase activity and the conversion of adenosine into pentostatin via its ATP phosphoribosyltransferase activity. The first step of cordycepin biosynthesis involves hydroxyl phosphorylation of the 3'-OH position on adenosine to produce adenosine-3'-monophosphate (3'-AMP), catalyzed by kinase activity of cns3. Next, 3'-AMP is dephosphorylated to 2'-carbonyl-3'-deoxyadenosine (2'-C-3'-dA) by cns2, which is finally converted to cordycepin (3'-deoxyadenosine) by the oxidoreductase cns1. This Cordyceps militaris (strain CM01) (Caterpillar fungus) protein is Bifunctional cordycepin biosynthesis cluster protein 3.